A 311-amino-acid polypeptide reads, in one-letter code: Lipoyl synthase (311 aa).

Positions 55, 60, 66, 81, 85, 88, and 292 each coordinate [4Fe-4S] cluster. The region spanning 67 to 281 (WEDREATFLI…ARFAEGLGFA (215 aa)) is the Radical SAM core domain.

This sequence belongs to the radical SAM superfamily. Lipoyl synthase family. It depends on [4Fe-4S] cluster as a cofactor.

The protein resides in the cytoplasm. The catalysed reaction is [[Fe-S] cluster scaffold protein carrying a second [4Fe-4S](2+) cluster] + N(6)-octanoyl-L-lysyl-[protein] + 2 oxidized [2Fe-2S]-[ferredoxin] + 2 S-adenosyl-L-methionine + 4 H(+) = [[Fe-S] cluster scaffold protein] + N(6)-[(R)-dihydrolipoyl]-L-lysyl-[protein] + 4 Fe(3+) + 2 hydrogen sulfide + 2 5'-deoxyadenosine + 2 L-methionine + 2 reduced [2Fe-2S]-[ferredoxin]. It functions in the pathway protein modification; protein lipoylation via endogenous pathway; protein N(6)-(lipoyl)lysine from octanoyl-[acyl-carrier-protein]: step 2/2. In terms of biological role, catalyzes the radical-mediated insertion of two sulfur atoms into the C-6 and C-8 positions of the octanoyl moiety bound to the lipoyl domains of lipoate-dependent enzymes, thereby converting the octanoylated domains into lipoylated derivatives. In Mycobacterium bovis (strain ATCC BAA-935 / AF2122/97), this protein is Lipoyl synthase.